The primary structure comprises 1117 residues: DNA polymerase II large subunit (1117 aa).

The span at 279–294 shows a compositional bias: basic and acidic residues; sequence STKEEEKKKEESSENK. The segment at 279 to 299 is disordered; that stretch reads STKEEEKKKEESSENKPKKKA.

It belongs to the archaeal DNA polymerase II family. Heterodimer of a large subunit and a small subunit.

The enzyme catalyses DNA(n) + a 2'-deoxyribonucleoside 5'-triphosphate = DNA(n+1) + diphosphate. It catalyses the reaction Exonucleolytic cleavage in the 3'- to 5'-direction to yield nucleoside 5'-phosphates.. Its function is as follows. Possesses two activities: a DNA synthesis (polymerase) and an exonucleolytic activity that degrades single-stranded DNA in the 3'- to 5'-direction. Has a template-primer preference which is characteristic of a replicative DNA polymerase. This is DNA polymerase II large subunit from Methanosphaera stadtmanae (strain ATCC 43021 / DSM 3091 / JCM 11832 / MCB-3).